A 178-amino-acid polypeptide reads, in one-letter code: Large ribosomal subunit protein uL16 (178 aa).

It belongs to the universal ribosomal protein uL16 family.

The protein is Large ribosomal subunit protein uL16 of Saccharolobus islandicus (strain Y.N.15.51 / Yellowstone #2) (Sulfolobus islandicus).